The sequence spans 503 residues: Aspartyl/glutamyl-tRNA(Asn/Gln) amidotransferase subunit B (503 aa).

This sequence belongs to the GatB/GatE family. GatB subfamily. Heterotrimer of A, B and C subunits.

The enzyme catalyses L-glutamyl-tRNA(Gln) + L-glutamine + ATP + H2O = L-glutaminyl-tRNA(Gln) + L-glutamate + ADP + phosphate + H(+). It catalyses the reaction L-aspartyl-tRNA(Asn) + L-glutamine + ATP + H2O = L-asparaginyl-tRNA(Asn) + L-glutamate + ADP + phosphate + 2 H(+). Functionally, allows the formation of correctly charged Asn-tRNA(Asn) or Gln-tRNA(Gln) through the transamidation of misacylated Asp-tRNA(Asn) or Glu-tRNA(Gln) in organisms which lack either or both of asparaginyl-tRNA or glutaminyl-tRNA synthetases. The reaction takes place in the presence of glutamine and ATP through an activated phospho-Asp-tRNA(Asn) or phospho-Glu-tRNA(Gln). This Ruegeria pomeroyi (strain ATCC 700808 / DSM 15171 / DSS-3) (Silicibacter pomeroyi) protein is Aspartyl/glutamyl-tRNA(Asn/Gln) amidotransferase subunit B.